A 663-amino-acid polypeptide reads, in one-letter code: Rho GTPase-activating protein 18 (663 aa).

2 disordered regions span residues 14 to 73 and 85 to 106; these read AYHP…DESM and RSNENRQEGQEAIVVKEPDEGE. Basic and acidic residues predominate over residues 27-37; that stretch reads SHVKGGDEATS. A compositionally biased stretch (polar residues) spans 38–51; the sequence is SRRYGQYTINQEGS. Phosphoserine is present on residues S65 and S68. Residues 85–102 show a composition bias toward basic and acidic residues; sequence RSNENRQEGQEAIVVKEP. Position 156 is a phosphothreonine (T156). Disordered regions lie at residues 173 to 228 and 245 to 277; these read FAQQ…PASE and KEFSKERTQKISSNDSLPSFRLPKDKTGTTRIG. Basic and acidic residues-rich tracts occupy residues 178 to 205 and 212 to 222; these read EAQEKPPDDSDLRSVRTNENKGQGKDDQ and DSKEQISRVPE. Phosphoserine is present on residues S260 and S263. The 200-residue stretch at 324-523 folds into the Rho-GAP domain; it reads IPLTILLEQD…LLIRYQKILW (200 aa). A Phosphoserine modification is found at S610.

As to quaternary structure, interacts with MPHOSPH6. Widely expressed: expressed in most organs, except small intestine.

It is found in the cytoplasm. Rho GTPase activating protein that suppresses F-actin polymerization by inhibiting Rho. Rho GTPase activating proteins act by converting Rho-type GTPases to an inactive GDP-bound state. Plays a key role in tissue tension and 3D tissue shape by regulating cortical actomyosin network formation. Acts downstream of YAP1 and inhibits actin polymerization, which in turn reduces nuclear localization of YAP1. Regulates cell shape, spreading, and migration. In Mus musculus (Mouse), this protein is Rho GTPase-activating protein 18.